Reading from the N-terminus, the 256-residue chain is Ribonuclease HII (256 aa).

The RNase H type-2 domain maps to 72–256; sequence ALICGIDEVG…TFEPIKSLVN (185 aa). A divalent metal cation contacts are provided by aspartate 78, glutamate 79, and aspartate 170.

This sequence belongs to the RNase HII family. The cofactor is Mn(2+). Mg(2+) is required as a cofactor.

It is found in the cytoplasm. It catalyses the reaction Endonucleolytic cleavage to 5'-phosphomonoester.. In terms of biological role, endonuclease that specifically degrades the RNA of RNA-DNA hybrids. The protein is Ribonuclease HII of Staphylococcus saprophyticus subsp. saprophyticus (strain ATCC 15305 / DSM 20229 / NCIMB 8711 / NCTC 7292 / S-41).